Reading from the N-terminus, the 124-residue chain is Large ribosomal subunit protein bL12 (124 aa).

This sequence belongs to the bacterial ribosomal protein bL12 family. As to quaternary structure, homodimer. Part of the ribosomal stalk of the 50S ribosomal subunit. Forms a multimeric L10(L12)X complex, where L10 forms an elongated spine to which 2 to 4 L12 dimers bind in a sequential fashion. Binds GTP-bound translation factors.

Functionally, forms part of the ribosomal stalk which helps the ribosome interact with GTP-bound translation factors. Is thus essential for accurate translation. The chain is Large ribosomal subunit protein bL12 from Bacteroides fragilis (strain ATCC 25285 / DSM 2151 / CCUG 4856 / JCM 11019 / LMG 10263 / NCTC 9343 / Onslow / VPI 2553 / EN-2).